The sequence spans 433 residues: 3-phosphoshikimate 1-carboxyvinyltransferase (433 aa).

3-phosphoshikimate is bound by residues K22, S23, and R27. A phosphoenolpyruvate-binding site is contributed by K22. Phosphoenolpyruvate is bound by residues G96 and R129. 7 residues coordinate 3-phosphoshikimate: S175, S176, Q177, S203, D318, N341, and K345. Q177 contributes to the phosphoenolpyruvate binding site. The Proton acceptor role is filled by D318. The phosphoenolpyruvate site is built by R349, R393, and K418.

The protein belongs to the EPSP synthase family. In terms of assembly, monomer.

The protein resides in the cytoplasm. The catalysed reaction is 3-phosphoshikimate + phosphoenolpyruvate = 5-O-(1-carboxyvinyl)-3-phosphoshikimate + phosphate. It participates in metabolic intermediate biosynthesis; chorismate biosynthesis; chorismate from D-erythrose 4-phosphate and phosphoenolpyruvate: step 6/7. In terms of biological role, catalyzes the transfer of the enolpyruvyl moiety of phosphoenolpyruvate (PEP) to the 5-hydroxyl of shikimate-3-phosphate (S3P) to produce enolpyruvyl shikimate-3-phosphate and inorganic phosphate. The sequence is that of 3-phosphoshikimate 1-carboxyvinyltransferase from Mannheimia succiniciproducens (strain KCTC 0769BP / MBEL55E).